A 647-amino-acid polypeptide reads, in one-letter code: DNA ligase (647 aa).

Residues 30 to 34, 79 to 80, and Glu105 contribute to the NAD(+) site; these read DEEYD and SM. The active-site N6-AMP-lysine intermediate is Lys107. NAD(+)-binding residues include Arg128, Glu162, and Lys301. Residues Cys395, Cys398, Cys411, and Cys416 each coordinate Zn(2+). Residues 570–647 form the BRCT domain; that stretch reads KSDGVIFGKT…ESAFNELVKE (78 aa).

The protein belongs to the NAD-dependent DNA ligase family. LigA subfamily. The cofactor is Mg(2+). Requires Mn(2+) as cofactor.

The catalysed reaction is NAD(+) + (deoxyribonucleotide)n-3'-hydroxyl + 5'-phospho-(deoxyribonucleotide)m = (deoxyribonucleotide)n+m + AMP + beta-nicotinamide D-nucleotide.. In terms of biological role, DNA ligase that catalyzes the formation of phosphodiester linkages between 5'-phosphoryl and 3'-hydroxyl groups in double-stranded DNA using NAD as a coenzyme and as the energy source for the reaction. It is essential for DNA replication and repair of damaged DNA. This Campylobacter jejuni subsp. jejuni serotype O:6 (strain 81116 / NCTC 11828) protein is DNA ligase.